A 348-amino-acid chain; its full sequence is MLLGPLMMGLEGTRLSSEERTLLCHPRVGGVILFSRNFQSPEQLRALTDAIHALRRPPLLIAVDQEGGRVQRFREGFTRLPAPGVLAAVYDRDPAQARALSHDMGWLMASELLACGVDFSFAPVLDLGRGVSRVIGDRAFHSRPEAVVHLARGWVAGMRDAGMAAVGKHFPGHGSVAPDSHLELPRDPRARSALEGADLVPFRRLAGDRLPGMMTAHVIYQAIDPLPATFSGYWIGEVLRGELGYEGAVFSDDLGMAAAAEAGPLPRRARAAMEAGCDMVLLCNHPEAVPAVLRHLPDPDPVSDMRLVRLHGRPVVDNWRKLHRLTRWQEAVRRVRGQDPSPEGELEV.

Residues D64, R72, R138, and 168–169 (KH) each bind substrate. Catalysis depends on H181, which acts as the Proton donor/acceptor. D252 serves as the catalytic Nucleophile.

Belongs to the glycosyl hydrolase 3 family. NagZ subfamily.

It localises to the cytoplasm. The enzyme catalyses Hydrolysis of terminal non-reducing N-acetyl-D-hexosamine residues in N-acetyl-beta-D-hexosaminides.. It functions in the pathway cell wall biogenesis; peptidoglycan recycling. Plays a role in peptidoglycan recycling by cleaving the terminal beta-1,4-linked N-acetylglucosamine (GlcNAc) from peptide-linked peptidoglycan fragments, giving rise to free GlcNAc, anhydro-N-acetylmuramic acid and anhydro-N-acetylmuramic acid-linked peptides. In Alkalilimnicola ehrlichii (strain ATCC BAA-1101 / DSM 17681 / MLHE-1), this protein is Beta-hexosaminidase.